The primary structure comprises 363 residues: UDP-N-acetylglucosamine--N-acetylmuramyl-(pentapeptide) pyrophosphoryl-undecaprenol N-acetylglucosamine transferase (363 aa).

Residues 10–12 (TGG), Asn-124, Ser-195, Ile-250, and Gln-295 contribute to the UDP-N-acetyl-alpha-D-glucosamine site.

This sequence belongs to the glycosyltransferase 28 family. MurG subfamily.

Its subcellular location is the cell membrane. The enzyme catalyses di-trans,octa-cis-undecaprenyl diphospho-N-acetyl-alpha-D-muramoyl-L-alanyl-D-glutamyl-meso-2,6-diaminopimeloyl-D-alanyl-D-alanine + UDP-N-acetyl-alpha-D-glucosamine = di-trans,octa-cis-undecaprenyl diphospho-[N-acetyl-alpha-D-glucosaminyl-(1-&gt;4)]-N-acetyl-alpha-D-muramoyl-L-alanyl-D-glutamyl-meso-2,6-diaminopimeloyl-D-alanyl-D-alanine + UDP + H(+). It participates in cell wall biogenesis; peptidoglycan biosynthesis. Its function is as follows. Cell wall formation. Catalyzes the transfer of a GlcNAc subunit on undecaprenyl-pyrophosphoryl-MurNAc-pentapeptide (lipid intermediate I) to form undecaprenyl-pyrophosphoryl-MurNAc-(pentapeptide)GlcNAc (lipid intermediate II). The protein is UDP-N-acetylglucosamine--N-acetylmuramyl-(pentapeptide) pyrophosphoryl-undecaprenol N-acetylglucosamine transferase of Listeria welshimeri serovar 6b (strain ATCC 35897 / DSM 20650 / CCUG 15529 / CIP 8149 / NCTC 11857 / SLCC 5334 / V8).